The sequence spans 204 residues: Wound-induced proteinase inhibitor 2 (204 aa).

The N-terminal stretch at 1–25 is a signal peptide; the sequence is MAVPKEVSFLASLLVLGILLLHVDA. A run of 3 repeats spans residues 25-67, 68-125, and 126-183. Disulfide bonds link C28-C100, C38-C75, C41-C59, C42-C71, C48-C84, and C99-C117. One copy of the 4; truncated repeat lies at 184–204; it reads PKACPKNCDPNIAYSLCLYEK.

It belongs to the protease inhibitor I20 (potato type II proteinase inhibitor) family.

This chain is Wound-induced proteinase inhibitor 2 (PIN2), found in Capsicum annuum (Capsicum pepper).